The following is a 308-amino-acid chain: MGYLLTIACYIASFSPSIALFCSFIAHDPVRIILFFLGSFFWLVSLLFSSLAWLGLSTVLPDTFLLSLTVCIIAQELSRVAYFMLLKKAQRGLNKITRQGQISVAPGVSDLHNARHMLALVCGLGMGVISALFYTMNAFAIFSGPGTIGLPNALKTGEIDTNRAGKYLPLCYTLSAILLTLFHVTWTIMVWDSCHKIGRIPSAFVPGAAAVVSHLLVTFLSSLNSRGFHVLVFAVQFLILLICIAYCNVIMGGTISSFVNGIGQSITDAVTLKQVRTLIEERKLRTQRQSVPDEPMTERAGTSNTVNA.

7 helical membrane passes run 5 to 25 (LTIA…CSFI), 32 to 52 (IILF…SSLA), 53 to 73 (WLGL…VCII), 122 to 142 (CGLG…FAIF), 170 to 190 (LCYT…TIMV), 200 to 220 (IPSA…VTFL), and 230 to 250 (VLVF…CNVI). Positions 286–308 (TQRQSVPDEPMTERAGTSNTVNA) are disordered.

The protein belongs to the APH-1 family. As to quaternary structure, component of the gamma-secretase complex, a complex probably composed of the presenilin homodimer (sel-12, hop-1 or spe-4), nicastrin (aph-2), aph-1 and pen-2.

The protein localises to the membrane. Functionally, essential subunit of the gamma-secretase complex, an endoprotease complex that catalyzes the intramembrane cleavage of integral proteins such as Notch receptors (lin-12 or glp-1). It may represent a stabilizing cofactor for the presenilin homodimer that promotes the formation of a stable complex. Required for the localization of aph-2. The sequence is that of Gamma-secretase subunit aph-1 (aph-1) from Caenorhabditis elegans.